The chain runs to 1134 residues: Tyrosine-protein kinase receptor Tie-1 (1134 aa).

An N-terminal signal peptide occupies residues 1–22 (MVWWGSSLLLPTLFLASHVGAS). The Extracellular segment spans residues 23-755 (VDLTLLANLR…SRAAEEGLDQ (733 aa)). Residues 43 to 123 (CVSGEAGAGR…VLYVHNSPGA (81 aa)) enclose the Ig-like C2-type 1 domain. N-linked (GlcNAc...) asparagine glycans are attached at residues asparagine 81 and asparagine 159. EGF-like domains are found at residues 212–254 (GCGA…TRCE), 256–301 (ACRE…SQCQ), and 303–343 (ACAP…VHCE). Cystine bridges form between cysteine 226/cysteine 235, cysteine 229/cysteine 242, cysteine 244/cysteine 253, cysteine 266/cysteine 276, cysteine 270/cysteine 289, cysteine 291/cysteine 300, cysteine 313/cysteine 325, cysteine 319/cysteine 331, and cysteine 333/cysteine 342. In terms of domain architecture, Ig-like C2-type 2 spans 349–440 (PQILSMATEV…GQDSRRFKVN (92 aa)). 3 consecutive Fibronectin type-III domains span residues 444-543 (PPVP…CPEP), 546-638 (QPWL…LPPS), and 642-736 (APRH…LGNG). 3 N-linked (GlcNAc...) asparagine glycosylation sites follow: asparagine 501, asparagine 592, and asparagine 705. A helical transmembrane segment spans residues 756–780 (QLVLAVVGSVSATCLTILAALLALV). At 781 to 1134 (CIRRSCLHRR…AGIDATAEEA (354 aa)) the chain is on the cytoplasmic side. The region spanning 835-1114 (ITFEDLIGEG…RMLEARKAYV (280 aa)) is the Protein kinase domain. ATP is bound by residues 841–849 (IGEGNFGQV) and lysine 866. Aspartate 975 functions as the Proton acceptor in the catalytic mechanism. At tyrosine 1003 the chain carries Phosphotyrosine; by autocatalysis.

It belongs to the protein kinase superfamily. Tyr protein kinase family. Tie subfamily. Heterodimer with TEK/TIE2. Interacts with SVEP1 (via C-terminus). Post-translationally, phosphorylated on tyrosine residues in response to ANGPT1, most likely by TEK/TIE2. In terms of tissue distribution, specifically expressed in developing vascular endothelial cells. Abundantly expressed in lung and heart, moderately in brain, liver and kidney, and weakly in thymus, spleen and testis.

The protein resides in the cell membrane. The catalysed reaction is L-tyrosyl-[protein] + ATP = O-phospho-L-tyrosyl-[protein] + ADP + H(+). Its function is as follows. Transmembrane tyrosine-protein kinase that may modulate TEK/TIE2 activity and contribute to the regulation of angiogenesis. The sequence is that of Tyrosine-protein kinase receptor Tie-1 (Tie1) from Mus musculus (Mouse).